An 858-amino-acid polypeptide reads, in one-letter code: Neural cell adhesion molecule 1 (858 aa).

Residues 1–19 (MLQTKDLIWTLFFLGTAVS) form the signal peptide. Ig-like C2-type domains lie at 20–111 (LQVD…ATVN), 116–205 (QKLM…KDIQ), 212–301 (PTIQ…ATIH), 308–413 (PKIT…LEVQ), and 416–501 (PKLQ…ESLE). At 20–718 (LQVDIVPSQG…IPANGSPTSG (699 aa)) the chain is on the extracellular side. 2 cysteine pairs are disulfide-bonded: cysteine 41–cysteine 96 and cysteine 139–cysteine 189. Asparagine 222 carries an N-linked (GlcNAc...) asparagine glycan. Cysteine 235 and cysteine 287 are oxidised to a cystine. N-linked (GlcNAc...) asparagine glycans are attached at residues asparagine 315, asparagine 347, asparagine 433, asparagine 459, and asparagine 488. A disulfide bond links cysteine 329 and cysteine 395. A disulfide bond links cysteine 436 and cysteine 489. Fibronectin type-III domains lie at 509-608 (TPSS…TQPV) and 611-706 (EPSA…SAQP). A lipid anchor (GPI-anchor amidated asparagine) is attached at proline 706. The chain crosses the membrane as a helical span at residues 719-739 (LSTGAIVGILIVIFVLLLVVV). Residues 740–858 (DITCYFLNKC…TQTKENESKA (119 aa)) are Cytoplasmic-facing. Isoleucine 741 carries GPI-anchor amidated asparagine lipidation. Residues 766-858 (GAKGKDMEEG…TQTKENESKA (93 aa)) form a disordered region. 2 stretches are compositionally biased toward basic and acidic residues: residues 768–809 (KGKD…HTEP) and 817–834 (EPEK…ETET). Phosphoserine occurs at positions 780 and 784.

(Microbial infection) Interacts with rabies virus glycoprotein. As to quaternary structure, (Microbial infection) Interacts with Zika virus envelope protein E. In terms of assembly, interacts with MDK. Found in a complex with SLC39A6, SLC39A10 and with NCAM1; this complex controls NCAM1 phosphorylation and integration into focal adhesion complexes during epithelial-tomesenchymal transition. Interacts with synaptic plasticity regulator PANTS. Polysialylated at Asn-459 and Asn-488 by ST8SIA2 and ST8SIA4. Polysialylation modulates cell interactions by confering both attractive and repulsive properties that are highly regulated by ST8SIA2 and ST8SIA4. Polysialylation is formed on a-2,3-linked sialic acid of core glycans.

It localises to the cell membrane. It is found in the secreted. Functionally, this protein is a cell adhesion molecule involved in neuron-neuron adhesion, neurite fasciculation, outgrowth of neurites, etc. (Microbial infection) Acts as a receptor for rabies virus. In terms of biological role, (Microbial infection) Acts as a receptor for Zika virus. The protein is Neural cell adhesion molecule 1 of Homo sapiens (Human).